The chain runs to 450 residues: Allergen Fus c 3 (450 aa).

4 disordered regions span residues Glu-18–Gln-87, Asp-99–Pro-148, Ser-185–Glu-377, and Gln-398–Ser-426. A compositionally biased stretch (polar residues) spans Pro-31–Thr-46. A compositionally biased stretch (low complexity) spans His-101 to Gly-112. A compositionally biased stretch (basic and acidic residues) spans Ala-113–Arg-125. Basic residues predominate over residues Arg-272 to Pro-286. Positions Asp-291–Thr-304 are enriched in polar residues. Over residues Ala-305–Ser-341 the composition is skewed to low complexity. Over residues Thr-356–Glu-377 the composition is skewed to basic and acidic residues. The bHLH domain maps to Arg-368–Leu-441.

In Fusarium culmorum, this protein is Allergen Fus c 3.